Here is a 285-residue protein sequence, read N- to C-terminus: Seed agglutinin 2 (285 aa).

Positions 1–31 (MASYKFKTQNSFLLLLSISFFFLLLLNKVNS) are cleaved as a signal peptide. The N-linked (GlcNAc...) asparagine glycan is linked to Asn147. Mn(2+) contacts are provided by Glu156 and Asp158. Residues Asp158, Asn162, and Asp166 each contribute to the Ca(2+) site. Asp166 and His171 together coordinate Mn(2+).

It belongs to the leguminous lectin family. As to quaternary structure, homotetramer. In terms of processing, mostly found in non-glycosylated form. In terms of tissue distribution, expressed in seed.

Seed lectin. The sequence is that of Seed agglutinin 2 from Robinia pseudoacacia (Black locust).